The chain runs to 35 residues: Photosystem II reaction center protein M (35 aa).

Residues Ile-5 to Ile-25 traverse the membrane as a helical segment.

It belongs to the PsbM family. As to quaternary structure, PSII is composed of 1 copy each of membrane proteins PsbA, PsbB, PsbC, PsbD, PsbE, PsbF, PsbH, PsbI, PsbJ, PsbK, PsbL, PsbM, PsbT, PsbX, PsbY, PsbZ, Psb30/Ycf12, at least 3 peripheral proteins of the oxygen-evolving complex and a large number of cofactors. It forms dimeric complexes.

It localises to the plastid. Its subcellular location is the chloroplast thylakoid membrane. Its function is as follows. One of the components of the core complex of photosystem II (PSII). PSII is a light-driven water:plastoquinone oxidoreductase that uses light energy to abstract electrons from H(2)O, generating O(2) and a proton gradient subsequently used for ATP formation. It consists of a core antenna complex that captures photons, and an electron transfer chain that converts photonic excitation into a charge separation. This subunit is found at the monomer-monomer interface. This is Photosystem II reaction center protein M from Amborella trichopoda.